A 545-amino-acid polypeptide reads, in one-letter code: Transducer protein Htr7 (545 aa).

3 helical membrane passes run 10–30 (AVVA…AAAL), 44–64 (FWMA…SLML), and 80–100 (PLMA…LAIV). The disordered stretch occupies residues 111-157 (AQRRQEAEEERAEAERAREKAEQKQAEAERQTAEAESAKQDARERSA). The span at 123-157 (EAERAREKAEQKQAEAERQTAEAESAKQDARERSA) shows a compositional bias: basic and acidic residues. In terms of domain architecture, HAMP spans 164 to 217 (ADLESQATEVGATLEAASDGDLTARVDATTDNAEIAEVATVVNDMLTTMERTID). The 241-residue stretch at 236 to 476 (GAKEIQDASQ…RVVSSVDDIA (241 aa)) folds into the Methyl-accepting transducer domain. Position 281 is a glutamate methyl ester (Glu) (Glu281). Positions 521 to 545 (LNEFRTEATGTAHGEATDAPAGQSD) are disordered. Residues 527 to 539 (EATGTAHGEATDA) are compositionally biased toward low complexity.

The protein belongs to the methyl-accepting chemotaxis (MCP) protein family. Post-translationally, methylated by CheR.

The protein resides in the cell membrane. In terms of biological role, potentially involved in chemo- or phototactic signal transduction. The sequence is that of Transducer protein Htr7 (htr7) from Halobacterium salinarum (strain ATCC 29341 / DSM 671 / R1).